Reading from the N-terminus, the 322-residue chain is 4-hydroxythreonine-4-phosphate dehydrogenase (322 aa).

Substrate contacts are provided by His-131 and Thr-132. A divalent metal cation-binding residues include His-161, His-206, and His-259. Substrate contacts are provided by Lys-267, Asn-276, and Arg-285.

Belongs to the PdxA family. As to quaternary structure, homodimer. It depends on a divalent metal cation as a cofactor.

The protein resides in the cytoplasm. The enzyme catalyses 4-(phosphooxy)-L-threonine + NAD(+) = 3-amino-2-oxopropyl phosphate + CO2 + NADH. Its pathway is cofactor biosynthesis; pyridoxine 5'-phosphate biosynthesis; pyridoxine 5'-phosphate from D-erythrose 4-phosphate: step 4/5. Catalyzes the NAD(P)-dependent oxidation of 4-(phosphooxy)-L-threonine (HTP) into 2-amino-3-oxo-4-(phosphooxy)butyric acid which spontaneously decarboxylates to form 3-amino-2-oxopropyl phosphate (AHAP). The chain is 4-hydroxythreonine-4-phosphate dehydrogenase from Sulfurihydrogenibium sp. (strain YO3AOP1).